A 184-amino-acid polypeptide reads, in one-letter code: Cell wall protein phiA (184 aa).

The signal sequence occupies residues 1-21 (MQLKNLIFAAATAAALPATDA). N-linked (GlcNAc...) asparagine glycosylation is present at asparagine 58.

Belongs to the phiA family.

It localises to the secreted. It is found in the cell wall. In terms of biological role, cell wall protein involved in development of asexual structures such as phialide and conidium development, and thus required for spore formation. Plays a role as a general stress protectant produced by the fungus in competition with antagonistic bacteria. The sequence is that of Cell wall protein phiA from Aspergillus niger (strain ATCC MYA-4892 / CBS 513.88 / FGSC A1513).